Reading from the N-terminus, the 428-residue chain is Putative aminotransferase MSMEG_6286/MSMEI_6121 (428 aa).

Substrate is bound at residue Gly-37. Residues Tyr-72, 102–105, Asn-191, 222–225, and 256–258 contribute to the pyridoxal 5'-phosphate site; these read ASLE, AYAV, and STS. An Isoglutamyl lysine isopeptide (Lys-Gln) (interchain with Q-Cter in protein Pup) cross-link involves residue Lys-339.

Belongs to the class-I pyridoxal-phosphate-dependent aminotransferase family. Pyridoxal 5'-phosphate is required as a cofactor.

This is Putative aminotransferase MSMEG_6286/MSMEI_6121 from Mycolicibacterium smegmatis (strain ATCC 700084 / mc(2)155) (Mycobacterium smegmatis).